Reading from the N-terminus, the 1151-residue chain is Error-prone DNA polymerase (1151 aa).

Residues 1108–1151 (HPVPSGDALIEPLNDDRRDHADAPAQKIRHPRNVRILPPSRDFH) are disordered.

It belongs to the DNA polymerase type-C family. DnaE2 subfamily.

It localises to the cytoplasm. It carries out the reaction DNA(n) + a 2'-deoxyribonucleoside 5'-triphosphate = DNA(n+1) + diphosphate. In terms of biological role, DNA polymerase involved in damage-induced mutagenesis and translesion synthesis (TLS). It is not the major replicative DNA polymerase. This chain is Error-prone DNA polymerase, found in Bradyrhizobium diazoefficiens (strain JCM 10833 / BCRC 13528 / IAM 13628 / NBRC 14792 / USDA 110).